The following is a 66-amino-acid chain: Potassium channel toxin alpha-KTx 30.3 (66 aa).

Positions 1–24 are cleaved as a signal peptide; the sequence is MNKTFFLVVIMATVLVLAFDATDA. 3 disulfides stabilise this stretch: Cys30–Cys50, Cys36–Cys55, and Cys40–Cys57.

The protein belongs to the short scorpion toxin superfamily. Potassium channel inhibitor family. Alpha-KTx 30 subfamily. As to expression, expressed by the venom gland.

It localises to the secreted. Inhibits Kv1.3/KCNA3 channel. The chain is Potassium channel toxin alpha-KTx 30.3 from Scorpiops jendeki (Scorpion).